Here is a 275-residue protein sequence, read N- to C-terminus: Transcription regulator AOL_s00215g275 (275 aa).

Disordered stretches follow at residues 13–65 and 84–108; these read TPLP…SSIG and ILQQ…RQRL. Residues 14 to 26 are compositionally biased toward polar residues; the sequence is PLPSLNSSRSPQR. The segment covering 27–40 has biased composition (low complexity); sequence TPSLGSSSTSSLSP. Positions 47-60 are enriched in polar residues; it reads TPSTPESNDSGLTL. Positions 88-106 are enriched in basic residues; the sequence is KSRHQNQPSRRHKQKNRRQ.

Its function is as follows. Regulatory protein; part of the gene cluster that mediates the biosynthesis of sesquiterpenyl epoxy-cyclohexenoids (SECs) such as anthrobotrisins and arthrosporols, metabolites that possess a novel hybrid carbon skeleton consisting of a polyketide-derived epoxycyclohexenol combined with a terpenoid-derived monocyclic sesquiterpenol substructure (PKS-PTS hybrid). The SEC pathway plays an important role for fungal soil colonization via decreasing fungal nematode-capturing ability. AOL_s00215g275 can perform multiple functions in fungal growth and development via regulating the SEC biosynthesis, TCA cycle, and septa formation. Also involved in inhibiting conidial formation, germination, and nematicidal activity but promotes trap production. Plays a role in fungal resistances and significantly regulates the fungal morphology and responses to chemical stressors such as cell-wall-perturbing agents (SDS and Congo red), osmotic agents (NaCl and sorbitol), or the oxidant H(2)O(2). The polypeptide is Transcription regulator AOL_s00215g275 (Arthrobotrys oligospora (strain ATCC 24927 / CBS 115.81 / DSM 1491) (Nematode-trapping fungus)).